A 127-amino-acid chain; its full sequence is MLSRKAVAALLLVHVTAMLASQTEGFVPIFTYSELRRTQEREQNKRLRKSLRVQQRSKAAGRLEPQEVMEEEENGVIKLTAPVEIGVGLSSRQLEKHRAVLEALLSEALPPPSLVFGGQRPVTAAWE.

A signal peptide spans 1-25 (MLSRKAVAALLLVHVTAMLASQTEG). The disordered stretch occupies residues 41–67 (REQNKRLRKSLRVQQRSKAAGRLEPQE).

The protein belongs to the motilin family. Present in the gut mucosa with the exception of the gastric corpus. Also present in medulla oblongata, nucleus of the solitary tract, hypophysis, spinal cord, hypothalamus, and cerebellum but not in the cerebral cortex.

It is found in the secreted. Functionally, plays an important role in the regulation of interdigestive gastrointestinal motility and indirectly causes rhythmic contraction of duodenal and colonic smooth muscle. The polypeptide is Promotilin (MLN) (Cavia porcellus (Guinea pig)).